The chain runs to 820 residues: Leucine--tRNA ligase (820 aa).

The short motif at 42–52 (PYPSGDLHMGH) is the 'HIGH' region element. A 'KMSKS' region motif is present at residues 576–580 (KMSKS). An ATP-binding site is contributed by lysine 579.

Belongs to the class-I aminoacyl-tRNA synthetase family.

The protein localises to the cytoplasm. The enzyme catalyses tRNA(Leu) + L-leucine + ATP = L-leucyl-tRNA(Leu) + AMP + diphosphate. This chain is Leucine--tRNA ligase, found in Coxiella burnetii (strain CbuG_Q212) (Coxiella burnetii (strain Q212)).